A 1035-amino-acid polypeptide reads, in one-letter code: FERM domain-containing protein 4B (1035 aa).

The FERM domain maps to 59–361 (RHCQVHLLDD…SQHQFYLDRK (303 aa)). Phosphoserine is present on Ser-372. Coiled-coil stretches lie at residues 414 to 451 (QDSE…LKKI) and 535 to 559 (KQDY…RIRC). A necessary for adherens junction and tight junction localization region spans residues 542–972 (VKRLQEIENS…TQLTIGLSEY (431 aa)). 4 disordered regions span residues 563-615 (PSQK…ILPP), 631-699 (NEQF…LESQ), 713-738 (FTLS…SQSS), and 754-798 (TQTL…SKGQ). Low complexity predominate over residues 571–590 (PPEDIIPSESSSLSDTTTYD). The span at 594–607 (DSFTLAGQRPSSVP) shows a compositional bias: polar residues. Ser-609 is subject to Phosphoserine. A compositionally biased stretch (basic and acidic residues) spans 635 to 644 (MDTRHSREML). Polar residues-rich tracts occupy residues 664-699 (MPTT…LESQ) and 715-725 (LSKSQRSSSTE). Ser-698 bears the Phosphoserine mark. Residues 762 to 771 (RGRRRSKKHS) show a composition bias toward basic residues. Residues 772–782 (VSTSNSGSMPN) show a composition bias toward polar residues. Residue Lys-883 forms a Glycyl lysine isopeptide (Lys-Gly) (interchain with G-Cter in SUMO2) linkage. 3 disordered regions span residues 906 to 926 (RASG…SDRG), 939 to 958 (PCSP…TNAS), and 994 to 1035 (PSRQ…GTLV). A compositionally biased stretch (polar residues) spans 907–921 (ASGQKDQGHSPQTSF). Ser-916 carries the phosphoserine modification. A compositionally biased stretch (low complexity) spans 941 to 958 (SPSSRASSYSSVSSTNAS). The segment covering 1019 to 1035 (SEQRLFWHEDSKPGTLV) has biased composition (basic and acidic residues). Residue Lys-1030 forms a Glycyl lysine isopeptide (Lys-Gly) (interchain with G-Cter in SUMO2) linkage.

In terms of assembly, interacts with CYTH3. Interacts with PARD3. Interacts with CYTH1. In terms of tissue distribution, isoform 1 is expressed in the brain. Isoform 2 is expressed in the lung (at protein level).

The protein localises to the cytoplasm. It localises to the cytoskeleton. The protein resides in the cell junction. Its subcellular location is the tight junction. It is found in the adherens junction. In terms of biological role, member of GRP1 signaling complexes that are acutely recruited to plasma membrane ruffles in response to insulin receptor signaling. May function as a scaffolding protein that regulates epithelial cell polarity by connecting ARF6 activation with the PAR3 complex. Plays a redundant role with FRMD4A in epithelial polarization. This chain is FERM domain-containing protein 4B (Frmd4b), found in Mus musculus (Mouse).